Consider the following 838-residue polypeptide: DNA gyrase subunit A (838 aa).

Residues leucine 41 to leucine 510 enclose the Topo IIA-type catalytic domain. Tyrosine 129 (O-(5'-phospho-DNA)-tyrosine intermediate) is an active-site residue. A GyrA-box motif is present at residues glutamine 537–glycine 543.

The protein belongs to the type II topoisomerase GyrA/ParC subunit family. Heterotetramer, composed of two GyrA and two GyrB chains. In the heterotetramer, GyrA contains the active site tyrosine that forms a transient covalent intermediate with DNA, while GyrB binds cofactors and catalyzes ATP hydrolysis.

Its subcellular location is the cytoplasm. It carries out the reaction ATP-dependent breakage, passage and rejoining of double-stranded DNA.. In terms of biological role, a type II topoisomerase that negatively supercoils closed circular double-stranded (ds) DNA in an ATP-dependent manner to modulate DNA topology and maintain chromosomes in an underwound state. Negative supercoiling favors strand separation, and DNA replication, transcription, recombination and repair, all of which involve strand separation. Also able to catalyze the interconversion of other topological isomers of dsDNA rings, including catenanes and knotted rings. Type II topoisomerases break and join 2 DNA strands simultaneously in an ATP-dependent manner. The chain is DNA gyrase subunit A from Mycobacterium tuberculosis (strain CDC 1551 / Oshkosh).